Reading from the N-terminus, the 194-residue chain is ATP-dependent Clp protease proteolytic subunit (194 aa).

Ser97 acts as the Nucleophile in catalysis. The active site involves His122.

The protein belongs to the peptidase S14 family. In terms of assembly, fourteen ClpP subunits assemble into 2 heptameric rings which stack back to back to give a disk-like structure with a central cavity, resembling the structure of eukaryotic proteasomes.

Its subcellular location is the cytoplasm. It catalyses the reaction Hydrolysis of proteins to small peptides in the presence of ATP and magnesium. alpha-casein is the usual test substrate. In the absence of ATP, only oligopeptides shorter than five residues are hydrolyzed (such as succinyl-Leu-Tyr-|-NHMec, and Leu-Tyr-Leu-|-Tyr-Trp, in which cleavage of the -Tyr-|-Leu- and -Tyr-|-Trp bonds also occurs).. Functionally, cleaves peptides in various proteins in a process that requires ATP hydrolysis. Has a chymotrypsin-like activity. Plays a major role in the degradation of misfolded proteins. The sequence is that of ATP-dependent Clp protease proteolytic subunit from Thermus thermophilus (strain ATCC BAA-163 / DSM 7039 / HB27).